The chain runs to 401 residues: Exodeoxyribonuclease 7 large subunit (401 aa).

The protein belongs to the XseA family. Heterooligomer composed of large and small subunits.

It is found in the cytoplasm. It catalyses the reaction Exonucleolytic cleavage in either 5'- to 3'- or 3'- to 5'-direction to yield nucleoside 5'-phosphates.. Its function is as follows. Bidirectionally degrades single-stranded DNA into large acid-insoluble oligonucleotides, which are then degraded further into small acid-soluble oligonucleotides. The sequence is that of Exodeoxyribonuclease 7 large subunit from Syntrophotalea carbinolica (strain DSM 2380 / NBRC 103641 / GraBd1) (Pelobacter carbinolicus).